Reading from the N-terminus, the 272-residue chain is 3-methyl-2-oxobutanoate hydroxymethyltransferase (272 aa).

Mg(2+) contacts are provided by Asp-50 and Asp-89. Residues 50–51, Asp-89, and Lys-119 each bind 3-methyl-2-oxobutanoate; that span reads DS. Glu-121 contacts Mg(2+). Residue Glu-188 is the Proton acceptor of the active site.

This sequence belongs to the PanB family. As to quaternary structure, homodecamer; pentamer of dimers. Mg(2+) is required as a cofactor.

It localises to the cytoplasm. It catalyses the reaction 3-methyl-2-oxobutanoate + (6R)-5,10-methylene-5,6,7,8-tetrahydrofolate + H2O = 2-dehydropantoate + (6S)-5,6,7,8-tetrahydrofolate. It functions in the pathway cofactor biosynthesis; (R)-pantothenate biosynthesis; (R)-pantoate from 3-methyl-2-oxobutanoate: step 1/2. Functionally, catalyzes the reversible reaction in which hydroxymethyl group from 5,10-methylenetetrahydrofolate is transferred onto alpha-ketoisovalerate to form ketopantoate. The polypeptide is 3-methyl-2-oxobutanoate hydroxymethyltransferase (Methylobacterium radiotolerans (strain ATCC 27329 / DSM 1819 / JCM 2831 / NBRC 15690 / NCIMB 10815 / 0-1)).